A 111-amino-acid chain; its full sequence is MEPSMIVVTTENVTGYRTVRMLGQCFGVVVRSRGIGGNFIASLRSIVGGEIHEYTQMLEEARRHALDRLVHNATSMGANAIVMMRFDSAEIGQTMSEIVAYGTAAVIEPAR.

This sequence belongs to the UPF0145 family.

This chain is UPF0145 protein BRADO6695, found in Bradyrhizobium sp. (strain ORS 278).